The primary structure comprises 517 residues: Optineurin (517 aa).

2 coiled-coil regions span residues 15–127 (NLGS…DLVA) and 174–453 (KAES…LGRH). Disordered regions lie at residues 216 to 237 (KLEH…TNAS) and 454 to 488 (SMSE…WQQQ). Positions 222-237 (SSAQTSLPSAAETNAS) are enriched in polar residues. The CCHC NOA-type zinc-finger motif lies at 487-517 (QQNIPDHACPKCGEVLPDLDSLQIHIMDCII). Positions 495, 498, 511, and 515 each coordinate Zn(2+).

The protein resides in the cytoplasm. The protein localises to the perinuclear region. It localises to the golgi apparatus. Its subcellular location is the trans-Golgi network. It is found in the cytoplasmic vesicle. The protein resides in the recycling endosome. The protein localises to the autophagosome. Its function is as follows. Probably part of the TNF-alpha signaling pathway that can shift the equilibrium toward induction of cell death. May act by regulating membrane trafficking and cellular morphogenesis. The protein is Optineurin (optn) of Danio rerio (Zebrafish).